The following is a 187-amino-acid chain: High affinity copper uptake protein 1 (187 aa).

At 1-65 the chain is on the extracellular side; that stretch reads MRMNHMEMHH…SSLVINTPGE (65 aa). The Bis-His motif motif lies at 9-10; the sequence is HH. Asn-19 carries an N-linked (GlcNAc...) asparagine glycan. Thr-30 carries O-linked (GalNAc...) threonine glycosylation. The chain crosses the membrane as a helical span at residues 66 to 86; sequence MAGAFVAVFLLAMFYEGLKIA. The Cytoplasmic segment spans residues 87-129; sequence REGLLRKSQVSIRYNSMPVPGPNGTILMETHKTVGQQMLSFPH. At Thr-111 the chain carries Phosphothreonine. A helical membrane pass occupies residues 130 to 150; that stretch reads LLQTVLHIIQVVISYFLMLIF. Topologically, residues 151-153 are extracellular; the sequence is MTY. A helical transmembrane segment spans residues 154–174; that stretch reads NGYLCIAVAAGAGTGYFLFSW. The Cytoplasmic segment spans residues 175–187; the sequence is KKAVVVDITEHCH. The residue at position 186 (Cys-186) is a Cysteine sulfenic acid (-SOH).

The protein belongs to the copper transporter (Ctr) (TC 1.A.56) family. SLC31A subfamily. As to quaternary structure, homotrimer; is stabilized by cisplatin via interactions between cisplatin and the methionine-rich clusters, and could be crucial for the copper(2+) reduction process and copper(1+) stabilization. Heterotrimer between SLC31A1, CCS and SOD1; this heterotrimer is copper(1+)-mediated and its maintenance is regulated through SOD1 activation. Interacts with KDR; this interaction is induced upon VEGFA stimulation leading to SLC31A1 and KDR subsequent co-internalization to early endosomes, thereby activating KDR downstream signaling in endothelial cells. Interacts (via C-terminal domain) with ATOX1 (via dimer form); this interaction improves ATOX1 stability and controls intracellular copper(1+) levels. Interacts with SLC31A2; this interaction stabilizes SLC31A2 and protects its from ubiquitination and degradation. Interacts (via C-terminal domain) with CCS; this interaction is copper(1+)-mediated. O-Glycosylation at Thr-30 protects from proteolytic cleavage in the N-terminal extracellular domain. In terms of processing, proteolytic cleavage, leading to a truncated form, is facilitated by SLC31A2 and initiated preferentially by CTSL and to a minor extend by CTSB in endolysosomal compartments. A post-CTSL/cathepsin L processing occurs to yield to the fully truncated form. Post-translationally, sulfenylated at Cys-186 after stimulation with VEGFA, which induces SLC31A1-KDR disulfide bond formation and their co-internalization to early endosomes, driving to a sustained VEGFR2 signaling.

The protein localises to the cell membrane. It localises to the early endosome membrane. It is found in the recycling endosome membrane. Its subcellular location is the apical cell membrane. The protein resides in the late endosome membrane. The protein localises to the basolateral cell membrane. The catalysed reaction is Cu(+)(out) = Cu(+)(in). It catalyses the reaction Ag(+)(out) = Ag(+)(in). Its activity is regulated as follows. Copper uptake is inhibited by cold temperature, silver and zinc ions. Platinum-containing chemotherapeutic agents uptake is inhibited by cold temperature and copper. Its function is as follows. Uniporter that mediates the transport of copper(1+) from the extracellular space to the cytoplasm, across the plasma membrane. Then, delivers directly copper(1+) to specific chaperone such as ATOX1, via a copper(1+)- mediated transient interaction between the C-terminal domain and a copper(1+) chaperone, thus controlling intracellular copper(1+) levels. May function in copper(1+) import from the apical membrane thus may drive intestinal copper absorption. The copper(1+) transport mechanism is sodium-independent, saturable and of high-affinity. Also mediates the uptake of silver(1+). May function in the influx of the platinum-containing chemotherapeutic agents. The platinum-containing chemotherapeutic agents uptake is saturable. Also participates in the first step of copper(2+) acquisition by cells through a direct transfer of copper(2+) from copper(2+) carriers in blood, such as ALB to the N-terminal domain of SLC31A1, leading to copper(2+) reduction and probably followed by copper(1+) stabilization. In addition, functions as a redox sensor to promote angiogenesis in endothelial cells, in a copper(1+) transport independent manner, by transmitting the VEGF-induced ROS signal through a sulfenylation at Cys-189 leading to a subsequent disulfide bond formation between SLC31A1 and KDR. The SLC31A1-KDR complex is then co-internalized to early endosomes, driving a sustained VEGFR2 signaling. In terms of biological role, mobilizes copper(1+) out of the endosomal compartment, making copper(1+) available for export out of the cells. This is High affinity copper uptake protein 1 from Rattus norvegicus (Rat).